The following is a 232-amino-acid chain: MSAPHTSSPRTAALIPAAGSGTRLGLGPKAFVEVAGRSLLARSVAALAPFVDEVVVALPAGMDLPAGVPARAIVGGETRQGSVRRLLEATEAGTVLIHDAARPFVPPPVILALLDAIAATGAATVALPVADTLVRAEGQSWGQLVPREGLWAVQTPQGFRRELLLQAHARAEAEQYAATDDAGLLARLGVQVRLVPGDARLFKVTTPGDLALAEALTGHVDGGWLTVEGEKR.

Belongs to the IspD/TarI cytidylyltransferase family. IspD subfamily.

The catalysed reaction is 2-C-methyl-D-erythritol 4-phosphate + CTP + H(+) = 4-CDP-2-C-methyl-D-erythritol + diphosphate. Its pathway is isoprenoid biosynthesis; isopentenyl diphosphate biosynthesis via DXP pathway; isopentenyl diphosphate from 1-deoxy-D-xylulose 5-phosphate: step 2/6. Its function is as follows. Catalyzes the formation of 4-diphosphocytidyl-2-C-methyl-D-erythritol from CTP and 2-C-methyl-D-erythritol 4-phosphate (MEP). The polypeptide is 2-C-methyl-D-erythritol 4-phosphate cytidylyltransferase (Deinococcus radiodurans (strain ATCC 13939 / DSM 20539 / JCM 16871 / CCUG 27074 / LMG 4051 / NBRC 15346 / NCIMB 9279 / VKM B-1422 / R1)).